The chain runs to 132 residues: Protein FasE (132 aa).

This is Protein FasE (fasE) from Escherichia coli.